The primary structure comprises 172 residues: 3-hydroxydecanoyl-[acyl-carrier-protein] dehydratase (172 aa).

The active site involves His71.

This sequence belongs to the thioester dehydratase family. FabA subfamily. As to quaternary structure, homodimer.

Its subcellular location is the cytoplasm. It catalyses the reaction a (3R)-hydroxyacyl-[ACP] = a (2E)-enoyl-[ACP] + H2O. The catalysed reaction is (3R)-hydroxydecanoyl-[ACP] = (2E)-decenoyl-[ACP] + H2O. The enzyme catalyses (2E)-decenoyl-[ACP] = (3Z)-decenoyl-[ACP]. The protein operates within lipid metabolism; fatty acid biosynthesis. In terms of biological role, necessary for the introduction of cis unsaturation into fatty acids. Catalyzes the dehydration of (3R)-3-hydroxydecanoyl-ACP to E-(2)-decenoyl-ACP and then its isomerization to Z-(3)-decenoyl-ACP. Can catalyze the dehydratase reaction for beta-hydroxyacyl-ACPs with saturated chain lengths up to 16:0, being most active on intermediate chain length. This Pseudoalteromonas atlantica (strain T6c / ATCC BAA-1087) protein is 3-hydroxydecanoyl-[acyl-carrier-protein] dehydratase.